Here is a 228-residue protein sequence, read N- to C-terminus: Prolactin-2B1 (228 aa).

The signal sequence occupies residues 1-31 (MLLSLTQMLSSRASSRLFLVSYLLLWENVVS). Cystine bridges form between C89-C194 and C203-C228.

Belongs to the somatotropin/prolactin family. Expressed specifically in placenta. Expressed at high levels in trophoblast cells from both junctional and labyrinth zones of the chorioallantoic placenta the last week of gestation.

Its subcellular location is the secreted. The polypeptide is Prolactin-2B1 (Prl2b1) (Mus musculus (Mouse)).